Here is a 122-residue protein sequence, read N- to C-terminus: Large ribosomal subunit protein uL14c (122 aa).

It belongs to the universal ribosomal protein uL14 family. In terms of assembly, part of the 50S ribosomal subunit.

The protein localises to the plastid. It is found in the chloroplast. Binds to 23S rRNA. The polypeptide is Large ribosomal subunit protein uL14c (Cucumis sativus (Cucumber)).